The following is a 333-amino-acid chain: MSKARVYTDVNVVRPKEYWDYESLVVQWGHQDDYEVVRKVGRGKYSEVFEGKNVNTNERCVIKILKPVKKKKIKREIKILQNLCGGPNIVKLYDIVRDEHSKTPSLVFEFVNSVDFKVLYPTLTDYDIRYYIYELLKALDFCHSQGIMHRDVKPHNVMIDHQLRKLRLIDWGLAEFYHPGKEYNVRVASRYFKGPELLVDLQDYDYSLDMWSLGCMFAGMIFRKEPFFYGHDNHDQLVKIAKVLGTNELDHYLNKYQLDLDPQLEALVGRHVPKPWSKFINADNQHLVSPEAIDFLDKLLQYDHQDRLTAREAMDHPYFAQVKAAESSRLRTQ.

Residues 34–319 form the Protein kinase domain; the sequence is YEVVRKVGRG…AREAMDHPYF (286 aa). ATP contacts are provided by residues 40-48 and K63; that span reads VGRGKYSEV. Residue D151 is the Proton acceptor of the active site.

The protein belongs to the protein kinase superfamily. Ser/Thr protein kinase family. CK2 subfamily. As to quaternary structure, heterotetramer of two catalytic alpha subunits and two regulatory beta subunits.

It is found in the nucleus. Its subcellular location is the nucleolus. It localises to the cytoplasm. The catalysed reaction is L-seryl-[protein] + ATP = O-phospho-L-seryl-[protein] + ADP + H(+). It carries out the reaction L-threonyl-[protein] + ATP = O-phospho-L-threonyl-[protein] + ADP + H(+). Casein kinases are operationally defined by their preferential utilization of acidic proteins such as caseins as substrates. The alpha chain contains the catalytic site. The tetrameric holoenzyme CK2 is composed of two alpha and two beta subunits. Acts as a circadian clock component that maintains the correct period length through phosphorylation of CCA1. In Arabidopsis thaliana (Mouse-ear cress), this protein is Casein kinase II subunit alpha-3.